Reading from the N-terminus, the 221-residue chain is Epididymal secretory glutathione peroxidase (221 aa).

Positions 1-21 (MAIQLRVFYLVPLLLASYVQT) are cleaved as a signal peptide. Cysteine 73 is an active-site residue.

Belongs to the glutathione peroxidase family. As to expression, epididymis.

The protein resides in the secreted. It catalyses the reaction 2 glutathione + H2O2 = glutathione disulfide + 2 H2O. Its function is as follows. Protects cells and enzymes from oxidative damage, by catalyzing the reduction of hydrogen peroxide, lipid peroxides and organic hydroperoxide, by glutathione. May constitute a glutathione peroxidase-like protective system against peroxide damage in sperm membrane lipids. This is Epididymal secretory glutathione peroxidase (Gpx5) from Rattus norvegicus (Rat).